We begin with the raw amino-acid sequence, 209 residues long: Ancillary SecYEG translocon subunit (209 aa).

Residues 1-23 (MAAHLEEQQELDNFKYFWKTTGK) lie on the Cytoplasmic side of the membrane. Residues 24-42 (WLFALLILAALGYLGYTVY) form a helical membrane-spanning segment. Over 43–209 (QNRAASQNQE…LLQMKLDSLK (167 aa)) the chain is Periplasmic. The stretch at 161–194 (PLLMETKGDVYAAQEKSQEALKNYGQALEKMPQD) is one TPR repeat.

Belongs to the YfgM family. As to quaternary structure, interacts with the SecYEG translocon. Forms a complex with PpiD.

Its subcellular location is the cell inner membrane. May mediate protein transfer from the SecYEG translocon to the periplasmic chaperone network via its periplasmic C-terminal region. This chain is Ancillary SecYEG translocon subunit, found in Neisseria gonorrhoeae (strain ATCC 700825 / FA 1090).